A 405-amino-acid chain; its full sequence is ATP-sensitive inward rectifier potassium channel 15 (405 aa).

Residues 1-90 (MVARWVKGSE…LQDLWTTVID (90 aa)) lie on the Cytoplasmic side of the membrane. A helical membrane pass occupies residues 91 to 117 (MKWRYKLTLFAATFVMTWFLFGVVYYA). Residues 118-143 (IAFIHGDLELGESNSNHTPCIMKVDS) lie on the Extracellular side of the membrane. Positions 144–160 (LTGAFLFSLESQTTIGY) form an intramembrane region, helical; Pore-forming. A Selectivity filter motif is present at residues 157 to 162 (TIGYGV). Residues 161–169 (GVRSITEEC) lie on the Extracellular side of the membrane. A helical membrane pass occupies residues 170–195 (PHAIFLLVAQLVITTLIEIFITGTFL). The Cytoplasmic portion of the chain corresponds to 196–405 (AKIARPKKRA…RSLLLQQSNV (210 aa)).

This sequence belongs to the inward rectifier-type potassium channel (TC 1.A.2.1) family. KCNJ15 subfamily. As to quaternary structure, can form heteromultimeric channels with Kir5.1/KCNJ16. Interacts with PATJ.

The protein resides in the membrane. The protein localises to the cell membrane. It catalyses the reaction K(+)(in) = K(+)(out). With respect to regulation, channel activity is regulated by variations of cytosolic pH; reversibly inhibited by acidic pH values. Inhibited by Ba(2+) and Cs(+) in a voltage-dependent manner. In terms of biological role, inward rectifier potassium channels are characterized by a greater tendency to allow potassium to flow into the cell rather than out of it. Their voltage dependence is regulated by the concentration of extracellular potassium; as external potassium is raised, the voltage range of the channel opening shifts to more positive voltages. The inward rectification is mainly due to the blockage of outward current by internal magnesium. The sequence is that of ATP-sensitive inward rectifier potassium channel 15 (Kcnj15) from Rattus norvegicus (Rat).